Here is a 371-residue protein sequence, read N- to C-terminus: Cytochrome b (371 aa).

4 helical membrane-spanning segments follow: residues 25–45 (FGSM…FLAI), 69–90 (WIMQ…YIHI), 105–125 (WLSG…GYVL), and 170–190 (FCAL…IHII). His-75 and His-89 together coordinate heme b. Heme b contacts are provided by His-174 and His-188. His-193 provides a ligand contact to a ubiquinone. The next 4 membrane-spanning stretches (helical) occupy residues 218–238 (YKDF…LSVS), 280–300 (LGGT…PFTH), 312–332 (LSQT…WTAT), and 339–358 (FITI…IMNP).

This sequence belongs to the cytochrome b family. The cytochrome bc1 complex contains 3 respiratory subunits (MT-CYB, CYC1 and UQCRFS1), 2 core proteins (UQCRC1 and UQCRC2) and probably 6 low-molecular weight proteins. Heme b serves as cofactor.

It localises to the mitochondrion inner membrane. Its function is as follows. Component of the ubiquinol-cytochrome c reductase complex (complex III or cytochrome b-c1 complex) that is part of the mitochondrial respiratory chain. The b-c1 complex mediates electron transfer from ubiquinol to cytochrome c. Contributes to the generation of a proton gradient across the mitochondrial membrane that is then used for ATP synthesis. The protein is Cytochrome b (MT-CYB) of Micrurus tener microgalbineus (Spotted coral snake).